The chain runs to 404 residues: Putative arginine deiminase (404 aa).

Catalysis depends on Cys394, which acts as the Amidino-cysteine intermediate.

This sequence belongs to the arginine deiminase family.

The protein localises to the cytoplasm. The enzyme catalyses L-arginine + H2O = L-citrulline + NH4(+). Its pathway is amino-acid degradation; L-arginine degradation via ADI pathway; carbamoyl phosphate from L-arginine: step 1/2. The chain is Putative arginine deiminase (arcA) from Mycoplasma pneumoniae (strain ATCC 29342 / M129 / Subtype 1) (Mycoplasmoides pneumoniae).